We begin with the raw amino-acid sequence, 488 residues long: MADVRKLKNYINGEWVESRADKYEDVINPATGEVLCQVPISTRAELDQAAVIAEQAFEKWSQVAVPRRARVLFSFQQLLIQHKEKLARLITLENGKNLSEARGEVQRGIENVEFAAGAPTLMMGDSLASIATDVEAANYRYPVGVVGGIAPFNFPMMVPCWMFPMAIALGNSFILKPSERTPLLMEKLVELFSEAGLPKGVFNVVYGAHDVVNGILENEIIKAVSFVGSKPVGEYVYKTGSANLKRVQALTGAKNHTIVLNDADLEDTVTNVISAAFGSAGERCMACAVVTVEEGIADEFLAALRTAAQNVKIGNGLDDGVFLGPVIREENQKRTIAYIEKGLEEGAKLTVDGRETGLSEGHFVGPTILEDVTTDMTIWKDEIFAPVLSVIRVKNLQEAVRVANQSEFANGACIFTNNAKAIRYFREKIDAGMLGVNLGVPAPMAFFPFSGWKSSFYGTLHANGKDSVDFYTHKKVVTARYSLKGYEE.

Residues A150, F152, K176, E179, R180, S229, and T251 each coordinate NAD(+). C284 (nucleophile) is an active-site residue. E382 contacts NAD(+).

This sequence belongs to the aldehyde dehydrogenase family. IolA subfamily. As to quaternary structure, homotetramer.

It catalyses the reaction 3-oxopropanoate + NAD(+) + CoA + H2O = hydrogencarbonate + acetyl-CoA + NADH + H(+). The enzyme catalyses 2-methyl-3-oxopropanoate + NAD(+) + CoA + H2O = propanoyl-CoA + hydrogencarbonate + NADH + H(+). Its pathway is polyol metabolism; myo-inositol degradation into acetyl-CoA; acetyl-CoA from myo-inositol: step 7/7. Catalyzes the oxidation of malonate semialdehyde (MSA) and methylmalonate semialdehyde (MMSA) into acetyl-CoA and propanoyl-CoA, respectively. Is involved in a myo-inositol catabolic pathway. Bicarbonate, and not CO2, is the end-product of the enzymatic reaction. In Listeria monocytogenes serotype 4b (strain F2365), this protein is Malonate-semialdehyde dehydrogenase.